The sequence spans 430 residues: Histidine--tRNA ligase (430 aa).

The protein belongs to the class-II aminoacyl-tRNA synthetase family. In terms of assembly, homodimer.

It is found in the cytoplasm. The catalysed reaction is tRNA(His) + L-histidine + ATP = L-histidyl-tRNA(His) + AMP + diphosphate + H(+). In Gloeothece citriformis (strain PCC 7424) (Cyanothece sp. (strain PCC 7424)), this protein is Histidine--tRNA ligase.